The following is a 348-amino-acid chain: Centromere protein N (348 aa).

This sequence belongs to the CENP-N/CHL4 family.

The protein localises to the nucleus. Its subcellular location is the chromosome. It is found in the centromere. In terms of biological role, probable component of a centromeric complex involved in assembly of kinetochore proteins, mitotic progression and chromosome segregation. The chain is Centromere protein N (cenpn) from Xenopus tropicalis (Western clawed frog).